We begin with the raw amino-acid sequence, 657 residues long: Translation factor GUF1, mitochondrial (657 aa).

A mitochondrion-targeting transit peptide spans 1 to 39 (MRGCLQSVKWLTSALRPSQSLASSTRYPRRLLSTSAPRN). Residues 59-239 (ERFRNFCIVA…TVIEQIPAPV (181 aa)) form the tr-type G domain. GTP contacts are provided by residues 121–128 (HQGEDYLL), 185–189 (INKVD), and 239–242 (VGDR).

This sequence belongs to the TRAFAC class translation factor GTPase superfamily. Classic translation factor GTPase family. LepA subfamily.

Its subcellular location is the mitochondrion inner membrane. The enzyme catalyses GTP + H2O = GDP + phosphate + H(+). Functionally, promotes mitochondrial protein synthesis. May act as a fidelity factor of the translation reaction, by catalyzing a one-codon backward translocation of tRNAs on improperly translocated ribosomes. Binds to mitochondrial ribosomes in a GTP-dependent manner. The chain is Translation factor GUF1, mitochondrial from Ajellomyces capsulatus (strain H143) (Darling's disease fungus).